Here is a 429-residue protein sequence, read N- to C-terminus: Endo-beta-1,4-galactanase (429 aa).

Positions methionine 1–threonine 21 are cleaved as a signal peptide. Aspartate 146–lysine 149 provides a ligand contact to substrate. The active-site Proton donor is the glutamate 194. Substrate contacts are provided by residues threonine 233–asparagine 234 and histidine 267. The active-site Nucleophile is the glutamate 292. Threonine 296 serves as a coordination point for substrate. Aspartate 301, aspartate 303, histidine 305, and asparagine 307 together coordinate Ca(2+). Residues lysine 311 and aspartate 388 each coordinate substrate. Ca(2+) contacts are provided by serine 396 and aspartate 399.

It belongs to the glycosyl hydrolase 53 family. The cofactor is Ca(2+).

The protein resides in the secreted. The catalysed reaction is The enzyme specifically hydrolyzes (1-&gt;4)-beta-D-galactosidic linkages in type I arabinogalactans.. Involved in galactan degradation. Degrades arabinose-free galactan to galactooligosaccharides, producing galactotetraose as the main product along with galactotriose, galactobiose, and galactose. Is also able to degrade galactotetraose, galactotriose and galactobiose, suggesting an additional exo-mode of activity. May hydrolyze the beta-1,4-galactan linkages of the galactan portion of arabinogalactan type I, a pectic plant polysaccharide from which most of the arabinose has been removed. The polypeptide is Endo-beta-1,4-galactanase (Bacillus subtilis (strain 168)).